The primary structure comprises 474 residues: MKSIILFVLSLLLILEKQAAVMGQKGGSKGQLPSGSSQFPHGQKGQHYFGQKDQQHTKSKGSFSIQHTYHVDINDHDRTRKSQQYDLNALHKATKSKQHLGGSQQLLNYKQEGRDHDKSKGHFHMIVIHHKGGQAHRGTQNPSQDQGNSPSGKGLSSQYSNTEKRLWVHGLSKEQASASGAQKGRTQGGSQSSYVLQTEELVVNKQQRETKNSHQNKGHYQNAVDVREEHSSKLQTSLHPAHQDRLQHGSKDIFTTQDELLVYNKNQHQTKNLNQDQEHGQKAHKISYQSSRTEERQLNHGEKSVQKDVSKGSISIQTEKKIHGKSQNQVTIHSQDQEHGHKENKMSHQSSSTEERHLNCGEKGIQKGVSKGSISIQTEEQIHGKSQNQVRIPSQAQEYGHKENKISYRSSSTEERRLNSGEKDVQKGVSKGSISIQTEEKIHGKSQNQVTIPSQDQEHGHKENKMSYQSSSTE.

The signal sequence occupies residues 1–23; sequence MKSIILFVLSLLLILEKQAAVMG. Disordered stretches follow at residues 24-62, 132-158, 173-194, 226-247, and 272-474; these read QKGG…SKGS, GGQA…LSSQ, KEQA…QSSY, VREE…DRLQ, and NLNQ…SSTE. Polar residues-rich tracts occupy residues 31–40, 137–158, and 174–194; these read QLPSGSSQFP, RGTQ…LSSQ, and EQAS…QSSY. Residues 292-310 are compositionally biased toward basic and acidic residues; that stretch reads RTEERQLNHGEKSVQKDVS. Residues 325 to 334 are compositionally biased toward polar residues; the sequence is KSQNQVTIHS. The segment covering 335–346 has biased composition (basic and acidic residues); that stretch reads QDQEHGHKENKM. Polar residues predominate over residues 372 to 397; the sequence is GSISIQTEEQIHGKSQNQVRIPSQAQ. Basic and acidic residues predominate over residues 399 to 426; the sequence is YGHKENKISYRSSSTEERRLNSGEKDVQ. Residues 445–455 show a composition bias toward polar residues; sequence KSQNQVTIPSQ. A compositionally biased stretch (basic and acidic residues) spans 456 to 465; the sequence is DQEHGHKENK.

The protein belongs to the semenogelin family. Interacts with SERPINA5.

The protein localises to the secreted. Functionally, participates in the formation of a gel matrix (sperm coagulum) entrapping the accessory gland secretions and ejaculated spermatozoa. This chain is Semenogelin-2 (SEMG2), found in Gorilla gorilla gorilla (Western lowland gorilla).